The following is a 161-amino-acid chain: Putative outer membrane protein YedS (161 aa).

Positions 1 to 21 are cleaved as a signal peptide; that stretch reads MKRKVLAMLVPALLVAGAANA.

Belongs to the Gram-negative porin family.

The protein localises to the cell outer membrane. The polypeptide is Putative outer membrane protein YedS (yedS) (Escherichia coli (strain K12)).